The sequence spans 157 residues: Protein Smg (157 aa).

The protein belongs to the Smg family.

This is Protein Smg from Yersinia pseudotuberculosis serotype O:1b (strain IP 31758).